The sequence spans 349 residues: Succinylglutamate desuccinylase (349 aa).

Zn(2+)-binding residues include H70, E73, and H166. The active site involves E229.

It belongs to the AspA/AstE family. Succinylglutamate desuccinylase subfamily. Zn(2+) serves as cofactor.

It carries out the reaction N-succinyl-L-glutamate + H2O = L-glutamate + succinate. It participates in amino-acid degradation; L-arginine degradation via AST pathway; L-glutamate and succinate from L-arginine: step 5/5. Functionally, transforms N(2)-succinylglutamate into succinate and glutamate. The sequence is that of Succinylglutamate desuccinylase from Burkholderia pseudomallei (strain 1710b).